A 352-amino-acid polypeptide reads, in one-letter code: 4-hydroxy-2-oxovalerate aldolase (352 aa).

A Pyruvate carboxyltransferase domain is found at 13–265 (VRLTDTSLRD…KTGIDFFDIA (253 aa)). Substrate is bound at residue 21–22 (RD). D22 contributes to the Mn(2+) binding site. The active-site Proton acceptor is H25. Substrate is bound by residues S175 and H204. Mn(2+)-binding residues include H204 and H206. Y295 is a binding site for substrate.

The protein belongs to the 4-hydroxy-2-oxovalerate aldolase family.

The catalysed reaction is (S)-4-hydroxy-2-oxopentanoate = acetaldehyde + pyruvate. The sequence is that of 4-hydroxy-2-oxovalerate aldolase from Mycobacterium avium (strain 104).